A 230-amino-acid chain; its full sequence is MQESQYKEKAIIGTGLITTSIGGFFFLRRFRRISNASTIPKNYLNNSTVENRKYKTMFGYVTRVGDGDNFRFYHTPGGRLLGWHWLRKVPCSRSDLSNETISVRLAGIDAPESAHFGKQEQPYALEAKEFLHNKLYHKSVRIIPLKIDRYARLVAGVQYYPIPHFFWKKDIGPQMIRKGLAVVYEGSDGVFCPTKKECLLALEIVAKKKKLSLWSQGKKLILPSVYKRGV.

The chain crosses the membrane as a helical span at residues 10 to 27 (AIIGTGLITTSIGGFFFL). The region spanning 55-216 (KTMFGYVTRV…KKKKLSLWSQ (162 aa)) is the TNase-like domain. The active site involves R104. A Ca(2+)-binding site is contributed by D109. Catalysis depends on residues E112 and R152.

This sequence belongs to the LCL3 family.

The protein resides in the mitochondrion. Its subcellular location is the membrane. This chain is Probable endonuclease C19F8.04c, found in Schizosaccharomyces pombe (strain 972 / ATCC 24843) (Fission yeast).